Consider the following 1680-residue polypeptide: RAF-like serine/threonine-protein kinase PRAF (1680 aa).

A disordered region spans residues 86–163 (FSPSDPHNSV…TPSDDGKDFP (78 aa)). The 102-residue stretch at 166-267 (RVKFMCSFGG…SRLRVFLFPA (102 aa)) folds into the PB1 domain. 7 disordered regions span residues 363-388 (LTGNLSNRSNAPSAPSSAPSSPPLLA), 417-516 (PQYT…DSQQ), 556-580 (PDMLQSSGAQPAVSGQQQQGYQPQQ), 594-613 (GANHEGAYRQGDQQQQSQQF), 641-672 (QSTSYHGSAPSSPRPGFRELPSRHLPGGPQLQ), 700-725 (RSFRLSSSPPRYRDHHPHSEERLHRQ), and 1186-1226 (LPNA…LGGQ). The span at 366-388 (NLSNRSNAPSAPSSAPSSPPLLA) shows a compositional bias: low complexity. Over residues 446–482 (HEMHYRSTDSRRGPESPPKKFHDALHQDHPITVEQRR) the composition is skewed to basic and acidic residues. Composition is skewed to low complexity over residues 560 to 580 (QSSGAQPAVSGQQQQGYQPQQ) and 603 to 613 (QGDQQQQSQQF). Residues 641–651 (QSTSYHGSAPS) are compositionally biased toward polar residues. Low complexity predominate over residues 1204 to 1217 (SRSSSSSLSELSKS). S1248 is subject to Phosphoserine. Residues 1339–1354 (ASTVDKENQEEVRTGL) are compositionally biased toward basic and acidic residues. The tract at residues 1339–1372 (ASTVDKENQEEVRTGLDEPADEDKANSTGLGSDP) is disordered. S1365 is modified (phosphoserine). The 267-residue stretch at 1389–1655 (LEELRELGSG…SDIAKELRTM (267 aa)) folds into the Protein kinase domain. Residues 1395-1403 (LGSGTFGTV) and K1416 contribute to the ATP site. The Proton acceptor role is filled by D1518. The disordered stretch occupies residues 1661–1680 (PKTQAQTQGQSHPHPQMQIV).

Belongs to the protein kinase superfamily. Ser/Thr protein kinase family. In terms of processing, hyperphosphorylated in response to auxin. Its phosphorylation state is also rapidly stimulated by photosynthetic activity (e.g. in response to blue light and red light irradiation); dephosphorylated in the darkness.

The protein localises to the cytoplasm. The enzyme catalyses L-seryl-[protein] + ATP = O-phospho-L-seryl-[protein] + ADP + H(+). It carries out the reaction L-threonyl-[protein] + ATP = O-phospho-L-threonyl-[protein] + ADP + H(+). With respect to regulation, activated by auxin via rapid phosphorylation. Regulated by photosynthesis-activity-dependent changes in its phosphorylation status. RAF-like protein kinase acting as a central mediator of a fast response pathway to auxin involving proteins phosphorylation, and leading to rapid cellular responses including membrane depolarization and cytoplasmic streaming. Required for general growth and developmental process. Photosynthesis signaling kinase involved in the regulation of the sucrose metabolism involving PGM1. Necessary for optimal chloroplast electron transport rate (ETR). The chain is RAF-like serine/threonine-protein kinase PRAF from Marchantia polymorpha (Common liverwort).